The sequence spans 258 residues: Meiotic drive suppressor wtf20 (258 aa).

The segment at 1–71 (MKNNYTSLKS…GPTEIANPNV (71 aa)) is disordered. Over residues 19 to 30 (KTDHEIDLEKGL) the composition is skewed to basic and acidic residues. 3 helical membrane-spanning segments follow: residues 84–106 (IYFLLRLLISVLAVSVVFFTAWV), 121–140 (FSVTIGITCPILFIAIFYFY), and 196–216 (SASAFTFMAVSSILIFIAETV).

The protein belongs to the WTF family. In terms of assembly, homomer. Interacts with other proteins that exhibit high sequence similarity.

It is found in the spore membrane. The protein resides in the vacuole membrane. Acts as a suppressor component of the dual wtf meiotic drive system, and can suppress but not confer meiotic drive by compatible poisons. Wtf meiotic drive systems promote unequal transmission of alleles from the parental zygote to progeny spores by encoding a poison and an antidote from the same locus; the poison is trans-acting and forms toxic aggregates in all spores within an ascus, wherease the antidote is spore-specific and targets aggregates for degradation by the vacuole. Meiotic drive by wtf systems therefore lead to poisoning of all progeny that do not inherit the dual poison/antidote allele, or express a compatible antidote. This Schizosaccharomyces pombe (strain 972 / ATCC 24843) (Fission yeast) protein is Meiotic drive suppressor wtf20.